Reading from the N-terminus, the 410-residue chain is Multifunctional CCA protein (410 aa).

ATP-binding residues include glycine 8 and arginine 11. The CTP site is built by glycine 8 and arginine 11. 2 residues coordinate Mg(2+): glutamate 21 and aspartate 23. Residues arginine 91, arginine 137, and arginine 140 each coordinate ATP. CTP is bound by residues arginine 91, arginine 137, and arginine 140. One can recognise an HD domain in the interval 228–329 (TGIHVMMALR…LKLFDRLDVW (102 aa)).

It belongs to the tRNA nucleotidyltransferase/poly(A) polymerase family. Bacterial CCA-adding enzyme type 1 subfamily. Monomer. Can also form homodimers and oligomers. Mg(2+) is required as a cofactor. The cofactor is Ni(2+).

It catalyses the reaction a tRNA precursor + 2 CTP + ATP = a tRNA with a 3' CCA end + 3 diphosphate. The catalysed reaction is a tRNA with a 3' CCA end + 2 CTP + ATP = a tRNA with a 3' CCACCA end + 3 diphosphate. In terms of biological role, catalyzes the addition and repair of the essential 3'-terminal CCA sequence in tRNAs without using a nucleic acid template. Adds these three nucleotides in the order of C, C, and A to the tRNA nucleotide-73, using CTP and ATP as substrates and producing inorganic pyrophosphate. tRNA 3'-terminal CCA addition is required both for tRNA processing and repair. Also involved in tRNA surveillance by mediating tandem CCA addition to generate a CCACCA at the 3' terminus of unstable tRNAs. While stable tRNAs receive only 3'-terminal CCA, unstable tRNAs are marked with CCACCA and rapidly degraded. The protein is Multifunctional CCA protein of Tolumonas auensis (strain DSM 9187 / NBRC 110442 / TA 4).